A 168-amino-acid polypeptide reads, in one-letter code: Crossover junction endodeoxyribonuclease RuvC (168 aa).

Catalysis depends on residues Asp10, Glu70, and Asp143. Mg(2+) is bound by residues Asp10, Glu70, and Asp143.

The protein belongs to the RuvC family. Homodimer which binds Holliday junction (HJ) DNA. The HJ becomes 2-fold symmetrical on binding to RuvC with unstacked arms; it has a different conformation from HJ DNA in complex with RuvA. In the full resolvosome a probable DNA-RuvA(4)-RuvB(12)-RuvC(2) complex forms which resolves the HJ. It depends on Mg(2+) as a cofactor.

Its subcellular location is the cytoplasm. The catalysed reaction is Endonucleolytic cleavage at a junction such as a reciprocal single-stranded crossover between two homologous DNA duplexes (Holliday junction).. In terms of biological role, the RuvA-RuvB-RuvC complex processes Holliday junction (HJ) DNA during genetic recombination and DNA repair. Endonuclease that resolves HJ intermediates. Cleaves cruciform DNA by making single-stranded nicks across the HJ at symmetrical positions within the homologous arms, yielding a 5'-phosphate and a 3'-hydroxyl group; requires a central core of homology in the junction. The consensus cleavage sequence is 5'-(A/T)TT(C/G)-3'. Cleavage occurs on the 3'-side of the TT dinucleotide at the point of strand exchange. HJ branch migration catalyzed by RuvA-RuvB allows RuvC to scan DNA until it finds its consensus sequence, where it cleaves and resolves the cruciform DNA. The protein is Crossover junction endodeoxyribonuclease RuvC of Roseiflexus sp. (strain RS-1).